The sequence spans 692 residues: Elongation factor G 2 (692 aa).

Positions 8 to 283 (EKTRNIGIMA…SVVAYLPSPL (276 aa)) constitute a tr-type G domain. GTP-binding positions include 17 to 24 (AHIDAGKT), 81 to 85 (DTPGH), and 135 to 138 (NKMD).

The protein belongs to the TRAFAC class translation factor GTPase superfamily. Classic translation factor GTPase family. EF-G/EF-2 subfamily.

Its subcellular location is the cytoplasm. In terms of biological role, catalyzes the GTP-dependent ribosomal translocation step during translation elongation. During this step, the ribosome changes from the pre-translocational (PRE) to the post-translocational (POST) state as the newly formed A-site-bound peptidyl-tRNA and P-site-bound deacylated tRNA move to the P and E sites, respectively. Catalyzes the coordinated movement of the two tRNA molecules, the mRNA and conformational changes in the ribosome. The sequence is that of Elongation factor G 2 from Geobacter sulfurreducens (strain ATCC 51573 / DSM 12127 / PCA).